We begin with the raw amino-acid sequence, 1146 residues long: Myosin heavy chain kinase A (1146 aa).

A disordered region spans residues 1–25 (MFNIKKRKESITGIPPINVNSPQSV). The stretch at 100–120 (EQMEDQLEKTMKVVRNHTDSL) forms a coiled coil. A disordered region spans residues 158-191 (IQEKKSTSSPLVKGGISGGGGSGGDDSFDGANIS). Positions 172 to 181 (GISGGGGSGG) are enriched in gly residues. Coiled coils occupy residues 187–241 (GANI…KRIE) and 297–502 (SKIE…ASIS). The segment at 500 to 551 (SISPISSVPKSPITTKRSSIILNSPPMTSQQSSPKIQDLLSSSGSSSVSGIN) is pseudosubstrate/autoinhibitory domain. Over residues 521 to 534 (LNSPPMTSQQSSPK) the composition is skewed to polar residues. Residues 521–540 (LNSPPMTSQQSSPKIQDLLS) form a disordered region. The segment at 552–852 (ISSETGEMGI…KVGAKQLPKA (301 aa)) is catalytic. The Alpha-type protein kinase domain occupies 564–808 (EFDPIINKWI…VCALLDLDVK (245 aa)). 778 to 783 (GLGNLG) serves as a coordination point for ATP. WD repeat units lie at residues 867-897 (SFRE…RVFD), 910-938 (GHRK…KVHI), 952-980 (GHTG…KVWD), 993-1021 (VHTK…YVWD), 1033-1061 (GHED…KIWD), 1073-1101 (GHWN…KVWD), and 1114-1142 (SHSL…KVWE).

Belongs to the protein kinase superfamily. Alpha-type protein kinase family. ALPK subfamily. As to quaternary structure, oligomer. Mg(2+) serves as cofactor. Requires Mn(2+) as cofactor. Post-translationally, the N-terminus is blocked.

The catalysed reaction is L-threonyl-[myosin heavy-chain] + ATP = O-phospho-L-threonyl-[myosin heavy-chain] + ADP + H(+). Its function is as follows. Catalyzes its autophosphorylation, which is needed for enzymatic activity and phosphorylates myosin II heavy chain at a threonine in the C-terminal tail region. This phosphorylation is critical for regulating the assembly and disassembly of myosin II filament, affecting myosin localization during an array of cellular contractile events, including cytokinesis and capping of cell surface receptors as well as chemotactic cell locomotion. This chain is Myosin heavy chain kinase A (mhkA), found in Dictyostelium discoideum (Social amoeba).